Consider the following 639-residue polypeptide: Chaperone protein DnaK (639 aa).

T198 is subject to Phosphothreonine; by autocatalysis. Residues 603–618 show a composition bias toward low complexity; that stretch reads AKAQTQGGAQEGAAKQ. The tract at residues 603-639 is disordered; the sequence is AKAQTQGGAQEGAAKQSNATADDVVDAEFEEVKDDKK. The span at 625–639 shows a compositional bias: acidic residues; it reads DVVDAEFEEVKDDKK.

It belongs to the heat shock protein 70 family.

Acts as a chaperone. This chain is Chaperone protein DnaK, found in Shewanella sp. (strain MR-4).